A 414-amino-acid polypeptide reads, in one-letter code: Esterase FrsA (414 aa).

Belongs to the FrsA family.

The catalysed reaction is a carboxylic ester + H2O = an alcohol + a carboxylate + H(+). Its function is as follows. Catalyzes the hydrolysis of esters. The chain is Esterase FrsA from Klebsiella pneumoniae subsp. pneumoniae (strain ATCC 700721 / MGH 78578).